The chain runs to 356 residues: Activating signal cointegrator 1 complex subunit 1 (356 aa).

Residues 1-52 are required for interaction with ASCC3; the sequence is MDVLRPQIVTFDGRNYRKNPIQEKQYQHEEDEDFYPDSMEYSDEPCGAYEVA. One can recognise a KH domain in the interval 57–119; the sequence is GFRATVSAPS…NGVVSARTRI (63 aa).

Identified in the ASCC complex that contains ASCC1, ASCC2 and ASCC3. Interacts directly with ASCC3. The ASCC complex interacts with ALKBH3. Part of the ASC-1 complex, that contains TRIP4, ASCC1, ASCC2 and ASCC3. Interacts with CSRP1. Interacts with ZCCHC4. As to expression, expressed in the spinal cord, brain, paraspinal ganglia, thyroid, and submandibular glands.

The protein localises to the nucleus. It is found in the nucleus speckle. Its function is as follows. Plays a role in DNA damage repair as component of the ASCC complex. Part of the ASC-1 complex that enhances NF-kappa-B, SRF and AP1 transactivation. In cells responding to gastrin-activated paracrine signals, it is involved in the induction of SERPINB2 expression by gastrin. May also play a role in the development of neuromuscular junction. This Mus musculus (Mouse) protein is Activating signal cointegrator 1 complex subunit 1 (Ascc1).